Consider the following 701-residue polypeptide: Elongation factor G 2 (701 aa).

A tr-type G domain is found at N8–A290. GTP contacts are provided by residues A17–T24, D88–H92, and N142–D145.

This sequence belongs to the TRAFAC class translation factor GTPase superfamily. Classic translation factor GTPase family. EF-G/EF-2 subfamily.

It localises to the cytoplasm. Its function is as follows. Catalyzes the GTP-dependent ribosomal translocation step during translation elongation. During this step, the ribosome changes from the pre-translocational (PRE) to the post-translocational (POST) state as the newly formed A-site-bound peptidyl-tRNA and P-site-bound deacylated tRNA move to the P and E sites, respectively. Catalyzes the coordinated movement of the two tRNA molecules, the mRNA and conformational changes in the ribosome. The protein is Elongation factor G 2 of Pseudoalteromonas atlantica (strain T6c / ATCC BAA-1087).